The primary structure comprises 305 residues: tRNA uridine(34) hydroxylase (305 aa).

Positions 125 to 219 (ADENTVVVDT…YLEEVPREQS (95 aa)) constitute a Rhodanese domain. Cys-179 functions as the Cysteine persulfide intermediate in the catalytic mechanism.

The protein belongs to the TrhO family.

It catalyses the reaction uridine(34) in tRNA + AH2 + O2 = 5-hydroxyuridine(34) in tRNA + A + H2O. Catalyzes oxygen-dependent 5-hydroxyuridine (ho5U) modification at position 34 in tRNAs. The chain is tRNA uridine(34) hydroxylase from Brucella canis (strain ATCC 23365 / NCTC 10854 / RM-666).